The sequence spans 508 residues: Beta-glucosidase 10 (508 aa).

The N-terminal stretch at 1 to 22 (MKLYSLLSVFLVILLATSDSDA) is a signal peptide. A beta-D-glucoside is bound by residues Gln42, His142, and 187–188 (NE). Glu188 (proton donor) is an active-site residue. Residues Cys207 and Cys215 are joined by a disulfide bond. N-linked (GlcNAc...) asparagine glycans are attached at residues Asn214 and Asn219. Tyr331 contributes to the a beta-D-glucoside binding site. Asn365 is a glycosylation site (N-linked (GlcNAc...) asparagine). Glu398 is an a beta-D-glucoside binding site. The active-site Nucleophile is the Glu398. N-linked (GlcNAc...) asparagine glycosylation is present at Asn431. Positions 441 and 457 each coordinate a beta-D-glucoside. 3 N-linked (GlcNAc...) asparagine glycosylation sites follow: Asn463, Asn485, and Asn501.

The protein belongs to the glycosyl hydrolase 1 family.

The enzyme catalyses Hydrolysis of terminal, non-reducing beta-D-glucosyl residues with release of beta-D-glucose.. The sequence is that of Beta-glucosidase 10 from Arabidopsis thaliana (Mouse-ear cress).